The sequence spans 455 residues: Epoxide hydrolase 1 (455 aa).

Residues 1–21 traverse the membrane as a helical; Signal-anchor for type III membrane protein segment; it reads MWLEILLTSVLGFAIYWFISR. Residues 22 to 455 are Cytoplasmic-facing; sequence DKEETLPLED…RKFLSVLERQ (434 aa). Residue D226 is the Nucleophile of the active site. R295 bears the Dimethylated arginine mark. The active-site Proton donor is the Y374. H431 serves as the catalytic Proton acceptor.

It belongs to the peptidase S33 family. In terms of tissue distribution, found in liver.

Its subcellular location is the microsome membrane. The protein localises to the endoplasmic reticulum membrane. The catalysed reaction is cis-stilbene oxide + H2O = (1R,2R)-hydrobenzoin. It carries out the reaction 1-(4-methoxyphenyl)-N-methyl-N-[(3-methyloxetan-3-yl)methyl]methanamine + H2O = 2-{[(4-methoxybenzyl)(methyl)amino]methyl}-2-methylpropane-1,3-diol. It catalyses the reaction 8,9-epoxy-(5Z,11Z,14Z)-eicosatrienoate + H2O = 8,9-dihydroxy-(5Z,11Z,14Z)-eicosatrienoate. The enzyme catalyses 11,12-epoxy-(5Z,8Z,14Z)-eicosatrienoate + H2O = 11,12-dihydroxy-(5Z,8Z,14Z)-eicosatrienoate. The catalysed reaction is 2-(5Z,8Z,11Z,14Z-eicosatetraenoyl)-glycerol + H2O = glycerol + (5Z,8Z,11Z,14Z)-eicosatetraenoate + H(+). Its activity is regulated as follows. Inhibited by 10-hydroxystearamide and methoxy-arachidonyl fluorophosphate. In terms of biological role, biotransformation enzyme that catalyzes the hydrolysis of arene and aliphatic epoxides to less reactive and more water soluble dihydrodiols by the trans addition of water. Plays a role in the metabolism of endogenous lipids such as epoxide-containing fatty acids. Metabolizes the abundant endocannabinoid 2-arachidonoylglycerol (2-AG) to free arachidonic acid (AA) and glycerol. Binds 20(S)-hydroxycholesterol (20(S)-OHC). This chain is Epoxide hydrolase 1, found in Homo sapiens (Human).